Here is a 635-residue protein sequence, read N- to C-terminus: Threonine--tRNA ligase (635 aa).

Residues methionine 1–threonine 61 form the TGS domain. The segment at aspartate 242–proline 533 is catalytic. The Zn(2+) site is built by cysteine 333, histidine 384, and histidine 510.

It belongs to the class-II aminoacyl-tRNA synthetase family. In terms of assembly, homodimer. The cofactor is Zn(2+).

It localises to the cytoplasm. It carries out the reaction tRNA(Thr) + L-threonine + ATP = L-threonyl-tRNA(Thr) + AMP + diphosphate + H(+). Catalyzes the attachment of threonine to tRNA(Thr) in a two-step reaction: L-threonine is first activated by ATP to form Thr-AMP and then transferred to the acceptor end of tRNA(Thr). Also edits incorrectly charged L-seryl-tRNA(Thr). The chain is Threonine--tRNA ligase from Paraburkholderia phymatum (strain DSM 17167 / CIP 108236 / LMG 21445 / STM815) (Burkholderia phymatum).